A 415-amino-acid polypeptide reads, in one-letter code: Probable disease resistance protein At5g66890 (415 aa).

One can recognise an NB-ARC domain in the interval 8-43 (SFDALPHNLRECFLDMASFLEDQRIIASTIIDLWSA). LRR repeat units follow at residues 229–251 (SLEK…EDVS), 256–278 (SLQE…ISQV), 280–303 (SLKK…GDLR), 304–326 (DLET…IDRL), 328–351 (NLRF…GKLK), and 352–373 (KLEK…VKNL). A coiled-coil region spans residues 239–260 (HVVDALNELEDVSETLQSLQEI).

The protein belongs to the disease resistance NB-LRR family.

Functionally, possible disease resistance protein. This Arabidopsis thaliana (Mouse-ear cress) protein is Probable disease resistance protein At5g66890.